The following is a 122-amino-acid chain: Large ribosomal subunit protein uL14 (122 aa).

Belongs to the universal ribosomal protein uL14 family. Part of the 50S ribosomal subunit. Forms a cluster with proteins L3 and L19. In the 70S ribosome, L14 and L19 interact and together make contacts with the 16S rRNA in bridges B5 and B8.

Binds to 23S rRNA. Forms part of two intersubunit bridges in the 70S ribosome. The sequence is that of Large ribosomal subunit protein uL14 from Teredinibacter turnerae (strain ATCC 39867 / T7901).